The chain runs to 61 residues: UPF0434 protein Bfl377 (61 aa).

This sequence belongs to the UPF0434 family.

In Blochmanniella floridana, this protein is UPF0434 protein Bfl377.